A 476-amino-acid chain; its full sequence is Aspartyl/glutamyl-tRNA(Asn/Gln) amidotransferase subunit B (476 aa).

This sequence belongs to the GatB/GatE family. GatB subfamily. Heterotrimer of A, B and C subunits.

The enzyme catalyses L-glutamyl-tRNA(Gln) + L-glutamine + ATP + H2O = L-glutaminyl-tRNA(Gln) + L-glutamate + ADP + phosphate + H(+). The catalysed reaction is L-aspartyl-tRNA(Asn) + L-glutamine + ATP + H2O = L-asparaginyl-tRNA(Asn) + L-glutamate + ADP + phosphate + 2 H(+). Functionally, allows the formation of correctly charged Asn-tRNA(Asn) or Gln-tRNA(Gln) through the transamidation of misacylated Asp-tRNA(Asn) or Glu-tRNA(Gln) in organisms which lack either or both of asparaginyl-tRNA or glutaminyl-tRNA synthetases. The reaction takes place in the presence of glutamine and ATP through an activated phospho-Asp-tRNA(Asn) or phospho-Glu-tRNA(Gln). The chain is Aspartyl/glutamyl-tRNA(Asn/Gln) amidotransferase subunit B from Clostridium botulinum (strain Alaska E43 / Type E3).